Consider the following 199-residue polypeptide: Probable GTP-binding protein EngB (199 aa).

An EngB-type G domain is found at Asp28–Leu199. GTP is bound by residues Gly36–Ser43, Gly63–Leu67, Asp81–Gly84, Thr148–Asp151, and Phe180–Ser182. Mg(2+)-binding residues include Ser43 and Thr65.

Belongs to the TRAFAC class TrmE-Era-EngA-EngB-Septin-like GTPase superfamily. EngB GTPase family. Mg(2+) is required as a cofactor.

Necessary for normal cell division and for the maintenance of normal septation. The chain is Probable GTP-binding protein EngB from Streptococcus thermophilus (strain CNRZ 1066).